A 108-amino-acid chain; its full sequence is Guanine nucleotide-binding protein subunit gamma (108 aa).

Cys-104 carries the S-palmitoyl cysteine lipid modification. Cysteine methyl ester is present on Cys-105. A lipid anchor (S-farnesyl cysteine) is attached at Cys-105. The propeptide at 106 to 108 (VIS) is removed in mature form.

This sequence belongs to the G protein gamma family. As to quaternary structure, g proteins are composed of 3 units, alpha, beta and gamma.

It is found in the membrane. This chain is Guanine nucleotide-binding protein subunit gamma, found in Yarrowia lipolytica (strain CLIB 122 / E 150) (Yeast).